Reading from the N-terminus, the 302-residue chain is Recombination-associated protein RdgC (302 aa).

It belongs to the RdgC family.

It localises to the cytoplasm. The protein localises to the nucleoid. In terms of biological role, may be involved in recombination. This is Recombination-associated protein RdgC from Psychromonas ingrahamii (strain DSM 17664 / CCUG 51855 / 37).